A 532-amino-acid chain; its full sequence is FRIGIDA-like protein 4b (532 aa).

Belongs to the Frigida family. In terms of tissue distribution, expressed in leaves, shoot apex, flowers and during seed development.

The chain is FRIGIDA-like protein 4b (FRL4B) from Arabidopsis thaliana (Mouse-ear cress).